The chain runs to 144 residues: Large ribosomal subunit protein uL15 (144 aa).

Positions methionine 1–glycine 53 are disordered. Gly residues predominate over residues arginine 21 to alanine 31.

This sequence belongs to the universal ribosomal protein uL15 family. As to quaternary structure, part of the 50S ribosomal subunit.

Functionally, binds to the 23S rRNA. The sequence is that of Large ribosomal subunit protein uL15 from Serratia proteamaculans (strain 568).